The following is a 566-amino-acid chain: 5'-AMP-activated protein kinase subunit gamma-2 (566 aa).

The disordered stretch occupies residues 1–198; that stretch reads MGSAAMDTKK…SRIYASSSPP (198 aa). Positions 15–25 are enriched in low complexity; that stretch reads SSPGGSSGKKN. Residues 54–64 are compositionally biased toward basic and acidic residues; sequence NSEKHSSRKVD. Residues S65, S71, S73, S90, S138, S143, S158, S161, and S162 each carry the phosphoserine modification. Composition is skewed to low complexity over residues 132–144 and 156–172; these read KESSPNSNPSTSP and TSSVSSSPSTPTQVTKQ. A Phosphothreonine modification is found at T165. Over residues 180-189 the composition is skewed to basic and acidic residues; that stretch reads YKQEPERPES. Phosphoserine is present on S196. 3 consecutive CBS domains span residues 272–332, 354–412, and 427–489; these read PTSS…KSPM, TFKP…MSDM, and IGTY…NLDI. Residues R299, 314–319, V359, 380–381, and K399 each bind ADP; these read MLTITD and HR. Residues R299, 314–319, V359, H380, 380–381, K399, T429, A434, 455–456, 471–474, R498, H527, 527–528, and 543–546 each bind AMP; these read MLTITD, HR, SA, SKFD, and SLSD. ATP-binding positions include R299, 314-319, V359, 380-381, R381, and K399; these read MLTITD and HR. The short motif at 367–388 is the AMPK pseudosubstrate element; that stretch reads LFDAVYSLIKNKIHRLPVIDPI. Residues 471-474, R498, and 527-528 contribute to the ADP site; these read SKFD and HR. Residues 471–474, R498, and 527–528 each bind ATP; these read SKFD and HR. The region spanning 501-559 is the CBS 4 domain; the sequence is YFEGVVKCSKLETLETIVDRIVRAEVHRLVVVNEADSIVGIISLSDILQALILTPAGAK.

The protein belongs to the 5'-AMP-activated protein kinase gamma subunit family. As to quaternary structure, AMPK is a heterotrimer of an alpha catalytic subunit (PRKAA1 or PRKAA2), a beta (PRKAB1 or PRKAB2) and a gamma non-catalytic subunits (PRKAG1, PRKAG2 or PRKAG3). Interacts with FNIP1 and FNIP2. Phosphorylated by ULK1; leading to negatively regulate AMPK activity and suggesting the existence of a regulatory feedback loop between ULK1 and AMPK. Post-translationally, glycosylated; O-GlcNAcylated by OGT, promoting the AMP-activated protein kinase (AMPK) activity.

AMP/ATP-binding subunit of AMP-activated protein kinase (AMPK), an energy sensor protein kinase that plays a key role in regulating cellular energy metabolism. In response to reduction of intracellular ATP levels, AMPK activates energy-producing pathways and inhibits energy-consuming processes: inhibits protein, carbohydrate and lipid biosynthesis, as well as cell growth and proliferation. AMPK acts via direct phosphorylation of metabolic enzymes, and by longer-term effects via phosphorylation of transcription regulators. Also acts as a regulator of cellular polarity by remodeling the actin cytoskeleton; probably by indirectly activating myosin. Gamma non-catalytic subunit mediates binding to AMP, ADP and ATP, leading to activate or inhibit AMPK: AMP-binding results in allosteric activation of alpha catalytic subunit (PRKAA1 or PRKAA2) both by inducing phosphorylation and preventing dephosphorylation of catalytic subunits. ADP also stimulates phosphorylation, without stimulating already phosphorylated catalytic subunit. ATP promotes dephosphorylation of catalytic subunit, rendering the AMPK enzyme inactive. This chain is 5'-AMP-activated protein kinase subunit gamma-2 (Prkag2), found in Mus musculus (Mouse).